A 412-amino-acid polypeptide reads, in one-letter code: Inositol polyphosphate-5-phosphatase A (412 aa).

Residue Cys-409 is the site of S-farnesyl cysteine attachment. Residues 410–412 constitute a propeptide, removed in mature form; it reads VVQ.

It belongs to the inositol 1,4,5-trisphosphate 5-phosphatase type I family. In terms of assembly, interacts with TASOR. Isoprenylation at Cys-409 is required for localization at the membrane. Predominantly expressed in heart, brain, and skeletal muscle. In brain; high level in Purkinje cells.

Its subcellular location is the cell membrane. The protein localises to the cell projection. It localises to the dendrite. The catalysed reaction is 1D-myo-inositol 1,4,5-trisphosphate + H2O = 1D-myo-inositol 1,4-bisphosphate + phosphate. It carries out the reaction 1D-myo-inositol 1,3,4,5-tetrakisphosphate + H2O = 1D-myo-inositol 1,3,4-trisphosphate + phosphate. Functionally, phosphatase that specifically hydrolyzes the 5-phosphate of inositol 1,4,5-trisphosphate to inositol 1,4-bisphosphate, and inositol 1,3,4,5-tetrasphosphate to inositol 1,3,4-trisphosphate. Plays a crucial role in the survival of cerebellar Purkinje cells. This Homo sapiens (Human) protein is Inositol polyphosphate-5-phosphatase A.